The primary structure comprises 114 residues: U17-barytoxin-Tl1d (114 aa).

The N-terminal stretch at 1–20 (MKTIIVFLSLLVLATKFGDA) is a signal peptide. The propeptide occupies 21 to 74 (NEGVNQEQMKEVIQNEFREDFLNEMAAMSLLQQLEAIESTLLEKEADRNSRQKR). 3 cysteine pairs are disulfide-bonded: cysteine 75/cysteine 88, cysteine 82/cysteine 93, and cysteine 87/cysteine 108.

It belongs to the neurotoxin 14 (magi-1) family. 03 (ICK-30-40) subfamily. As to expression, expressed by the venom gland.

It localises to the secreted. Functionally, ion channel inhibitor. The polypeptide is U17-barytoxin-Tl1d (Trittame loki (Brush-footed trapdoor spider)).